A 607-amino-acid polypeptide reads, in one-letter code: Phosphogluconate dehydratase (607 aa).

The [4Fe-4S] cluster site is built by cysteine 156 and cysteine 223.

It belongs to the IlvD/Edd family. Requires [4Fe-4S] cluster as cofactor.

It carries out the reaction 6-phospho-D-gluconate = 2-dehydro-3-deoxy-6-phospho-D-gluconate + H2O. It functions in the pathway carbohydrate metabolism; Entner-Doudoroff pathway. Catalyzes the dehydration of 6-phospho-D-gluconate to 2-dehydro-3-deoxy-6-phospho-D-gluconate. The sequence is that of Phosphogluconate dehydratase from Zymomonas mobilis subsp. mobilis (strain ATCC 31821 / ZM4 / CP4).